Here is a 104-residue protein sequence, read N- to C-terminus: Large ribosomal subunit protein uL23 (104 aa).

The protein belongs to the universal ribosomal protein uL23 family. Part of the 50S ribosomal subunit. Contacts protein L29, and trigger factor when it is bound to the ribosome.

Its function is as follows. One of the early assembly proteins it binds 23S rRNA. One of the proteins that surrounds the polypeptide exit tunnel on the outside of the ribosome. Forms the main docking site for trigger factor binding to the ribosome. This is Large ribosomal subunit protein uL23 from Trichormus variabilis (strain ATCC 29413 / PCC 7937) (Anabaena variabilis).